Here is a 266-residue protein sequence, read N- to C-terminus: Probable dihydroorotate dehydrogenase B (NAD(+)), electron transfer subunit (266 aa).

Residues 5-99 form the FAD-binding FR-type domain; that stretch reads NVPEVLEIKR…RGPYGRGFEL (95 aa). C217, C222, C225, and C235 together coordinate [2Fe-2S] cluster.

The protein belongs to the PyrK family. As to quaternary structure, heterotetramer of 2 PyrK and 2 PyrD type B subunits. [2Fe-2S] cluster serves as cofactor. Requires FAD as cofactor.

It participates in pyrimidine metabolism; UMP biosynthesis via de novo pathway; orotate from (S)-dihydroorotate (NAD(+) route): step 1/1. In terms of biological role, responsible for channeling the electrons from the oxidation of dihydroorotate from the FMN redox center in the PyrD type B subunit to the ultimate electron acceptor NAD(+). This chain is Probable dihydroorotate dehydrogenase B (NAD(+)), electron transfer subunit, found in Methanothermobacter thermautotrophicus (strain ATCC 29096 / DSM 1053 / JCM 10044 / NBRC 100330 / Delta H) (Methanobacterium thermoautotrophicum).